We begin with the raw amino-acid sequence, 144 residues long: Large ribosomal subunit protein uL16 (144 aa).

The segment covering 1 to 17 (MLQPKKTKFRRQQKGRA) has biased composition (basic residues). Residues 1–22 (MLQPKKTKFRRQQKGRAKGNAQ) are disordered.

The protein belongs to the universal ribosomal protein uL16 family. In terms of assembly, part of the 50S ribosomal subunit.

Functionally, binds 23S rRNA and is also seen to make contacts with the A and possibly P site tRNAs. The protein is Large ribosomal subunit protein uL16 of Bacteroides thetaiotaomicron (strain ATCC 29148 / DSM 2079 / JCM 5827 / CCUG 10774 / NCTC 10582 / VPI-5482 / E50).